The following is a 100-amino-acid chain: Small ribosomal subunit protein uS14c (100 aa).

Belongs to the universal ribosomal protein uS14 family. As to quaternary structure, part of the 30S ribosomal subunit.

It is found in the plastid. The protein resides in the chloroplast. Functionally, binds 16S rRNA, required for the assembly of 30S particles. This is Small ribosomal subunit protein uS14c from Nymphaea alba (White water-lily).